Here is a 386-residue protein sequence, read N- to C-terminus: Palmitoyltransferase ZDHHC9 (386 aa).

At 1–35 the chain is on the cytoplasmic side; the sequence is MSAVMITRKITRKWEKLPGKNTFCCDGRVMMARQK. A helical membrane pass occupies residues 36–56; that stretch reads GVFYLTLFLIVGTCSLFFAFE. At 57 to 63 the chain is on the lumenal side; the sequence is CPYLAVH. Residues 64–84 form a helical membrane-spanning segment; that stretch reads LSPAIPVFAVLLFVFVMAMLL. Residues 85-183 are Cytoplasmic-facing; the sequence is RTSFSDPGVL…NCVGKRNYRY (99 aa). In terms of domain architecture, DHHC spans 139 to 189; that stretch reads KYCYTCKIFRPPRASHCSICDNCVDRFDHHCPWVGNCVGKRNYRYFYLFTL. Cys-169 serves as the catalytic S-palmitoyl cysteine intermediate. The chain crosses the membrane as a helical span at residues 184-204; sequence FYLFTLSLSLLTIYIFAFDIV. Over 205–224 the chain is Lumenal; sequence HVVLRSVDSGFVNTLKETPG. The helical transmembrane segment at 225–245 threads the bilayer; that stretch reads TVLEVLVCFFTLWSVVGLTGF. Residues 246–386 are Cytoplasmic-facing; it reads HTYLISLNQT…APAVIKESTH (141 aa). A compositionally biased stretch (polar residues) spans 306–334; it reads SCSSAPSNGATTVPVNKSSNPATQTTKSS. Positions 306–386 are disordered; sequence SCSSAPSNGA…APAVIKESTH (81 aa).

The protein belongs to the DHHC palmitoyltransferase family. ERF2/ZDHHC9 subfamily.

The protein resides in the endoplasmic reticulum membrane. Its subcellular location is the golgi apparatus membrane. The catalysed reaction is L-cysteinyl-[protein] + hexadecanoyl-CoA = S-hexadecanoyl-L-cysteinyl-[protein] + CoA. Palmitoyltransferase that catalyzes the addition of palmitate onto various protein substrates, such as ADRB2, GSDMD, HRAS, NRAS and CGAS. This chain is Palmitoyltransferase ZDHHC9, found in Danio rerio (Zebrafish).